The following is a 236-amino-acid chain: E3 ubiquitin-protein ligase ATL41 (236 aa).

The chain crosses the membrane as a helical span at residues 31-51 (IMLAAVASLSGVILIVFALHL). The RING-type; atypical zinc-finger motif lies at 108 to 150 (CAVCLSVLKEQDKARELPNCKHIFHVDCVDTWLTTCSTCPVCR).

Belongs to the RING-type zinc finger family. ATL subfamily.

The protein localises to the membrane. The catalysed reaction is S-ubiquitinyl-[E2 ubiquitin-conjugating enzyme]-L-cysteine + [acceptor protein]-L-lysine = [E2 ubiquitin-conjugating enzyme]-L-cysteine + N(6)-ubiquitinyl-[acceptor protein]-L-lysine.. Its pathway is protein modification; protein ubiquitination. Its function is as follows. E3 ubiquitin-protein ligase able to catalyze polyubiquitination with ubiquitin-conjugating enzyme E2 UBC8, UBC10, UBC11, UBC28, UBC29, UBC30, UBC35 and UBC36 in vitro. In Arabidopsis thaliana (Mouse-ear cress), this protein is E3 ubiquitin-protein ligase ATL41 (ATL41).